The chain runs to 1075 residues: Paired amphipathic helix protein pst2 (1075 aa).

3 PAH domains span residues 28-102, 138-208, and 243-319; these read SPNG…LPSS, LPCT…LPSS, and RPDN…TSLS. Phosphoserine is present on residues Ser641 and Ser643. The disordered stretch occupies residues 647–700; sequence LTEFVKQPKINGQRESRSAAAARKKEESGNKSQSNSQNSLSDESGNVTPVSKKQ. A compositionally biased stretch (basic and acidic residues) spans 658–675; the sequence is GQRESRSAAAARKKEESG. Over residues 676-691 the composition is skewed to low complexity; that stretch reads NKSQSNSQNSLSDESG.

Heterotetramer of alp13, clr6, prw1 and pst2.

It localises to the nucleus. Functionally, has a role in chromatin assembly and chromosome segregation. Involved in the deacetylation of histones. This Schizosaccharomyces pombe (strain 972 / ATCC 24843) (Fission yeast) protein is Paired amphipathic helix protein pst2 (pst2).